Consider the following 615-residue polypeptide: Dihydroxy-acid dehydratase (615 aa).

D81 is a binding site for Mg(2+). A [2Fe-2S] cluster-binding site is contributed by C122. The Mg(2+) site is built by D123 and K124. Position 124 is an N6-carboxylysine (K124). C195 is a binding site for [2Fe-2S] cluster. E491 provides a ligand contact to Mg(2+). Catalysis depends on S517, which acts as the Proton acceptor.

This sequence belongs to the IlvD/Edd family. As to quaternary structure, homodimer. [2Fe-2S] cluster is required as a cofactor. Mg(2+) serves as cofactor.

It carries out the reaction (2R)-2,3-dihydroxy-3-methylbutanoate = 3-methyl-2-oxobutanoate + H2O. The enzyme catalyses (2R,3R)-2,3-dihydroxy-3-methylpentanoate = (S)-3-methyl-2-oxopentanoate + H2O. Its pathway is amino-acid biosynthesis; L-isoleucine biosynthesis; L-isoleucine from 2-oxobutanoate: step 3/4. It participates in amino-acid biosynthesis; L-valine biosynthesis; L-valine from pyruvate: step 3/4. Functionally, functions in the biosynthesis of branched-chain amino acids. Catalyzes the dehydration of (2R,3R)-2,3-dihydroxy-3-methylpentanoate (2,3-dihydroxy-3-methylvalerate) into 2-oxo-3-methylpentanoate (2-oxo-3-methylvalerate) and of (2R)-2,3-dihydroxy-3-methylbutanoate (2,3-dihydroxyisovalerate) into 2-oxo-3-methylbutanoate (2-oxoisovalerate), the penultimate precursor to L-isoleucine and L-valine, respectively. The chain is Dihydroxy-acid dehydratase from Shewanella halifaxensis (strain HAW-EB4).